The sequence spans 20 residues: Cytochrome P450 3A5 (20 aa).

Belongs to the cytochrome P450 family. Heme is required as a cofactor.

The protein localises to the endoplasmic reticulum membrane. It localises to the microsome membrane. The enzyme catalyses an organic molecule + reduced [NADPH--hemoprotein reductase] + O2 = an alcohol + oxidized [NADPH--hemoprotein reductase] + H2O + H(+). Its function is as follows. 6-beta-testosterone hydroxylase. The polypeptide is Cytochrome P450 3A5 (Papio sp. (Baboon)).